Here is a 355-residue protein sequence, read N- to C-terminus: DNA polymerase IV (355 aa).

One can recognise a UmuC domain in the interval 7–188; that stretch reads IIHIDMDCFY…LPVRKLFGVG (182 aa). Positions 11 and 106 each coordinate Mg(2+). The active site involves Glu-107.

The protein belongs to the DNA polymerase type-Y family. In terms of assembly, monomer. Mg(2+) serves as cofactor.

Its subcellular location is the cytoplasm. It carries out the reaction DNA(n) + a 2'-deoxyribonucleoside 5'-triphosphate = DNA(n+1) + diphosphate. Functionally, poorly processive, error-prone DNA polymerase involved in untargeted mutagenesis. Copies undamaged DNA at stalled replication forks, which arise in vivo from mismatched or misaligned primer ends. These misaligned primers can be extended by PolIV. Exhibits no 3'-5' exonuclease (proofreading) activity. May be involved in translesional synthesis, in conjunction with the beta clamp from PolIII. This Legionella pneumophila (strain Lens) protein is DNA polymerase IV.